A 234-amino-acid polypeptide reads, in one-letter code: Thymidylate kinase (234 aa).

Position 21-28 (21-28 (GGEGTGKS)) interacts with ATP.

The protein belongs to the thymidylate kinase family.

It carries out the reaction dTMP + ATP = dTDP + ADP. Phosphorylation of dTMP to form dTDP in both de novo and salvage pathways of dTTP synthesis. In Rhizobium meliloti (strain 1021) (Ensifer meliloti), this protein is Thymidylate kinase.